We begin with the raw amino-acid sequence, 324 residues long: uncharacterized protein (324 aa).

8 helical membrane passes run 5-24 (VIGI…NRAM), 39-61 (FIFM…PLLL), 68-90 (FYWI…FAAA), 95-117 (WLIA…LFYV), 130-152 (QKIP…LIQL), 162-179 (MLLF…AYPL), 199-218 (LGMT…YGWW), and 228-250 (TVQS…FWAT).

The protein resides in the cell membrane. This is an uncharacterized protein from Bacillus subtilis (strain 168).